The following is a 261-amino-acid chain: 3-methyl-2-oxobutanoate hydroxymethyltransferase (261 aa).

Mg(2+) is bound by residues Asp42 and Asp81. 3-methyl-2-oxobutanoate is bound by residues 42 to 43 (DS), Asp81, and Lys110. Glu112 contributes to the Mg(2+) binding site. Glu179 serves as the catalytic Proton acceptor.

This sequence belongs to the PanB family. Homodecamer; pentamer of dimers. The cofactor is Mg(2+).

It localises to the cytoplasm. It carries out the reaction 3-methyl-2-oxobutanoate + (6R)-5,10-methylene-5,6,7,8-tetrahydrofolate + H2O = 2-dehydropantoate + (6S)-5,6,7,8-tetrahydrofolate. The protein operates within cofactor biosynthesis; coenzyme A biosynthesis. Catalyzes the reversible reaction in which hydroxymethyl group from 5,10-methylenetetrahydrofolate is transferred onto alpha-ketoisovalerate to form ketopantoate. This chain is 3-methyl-2-oxobutanoate hydroxymethyltransferase, found in Pyrobaculum neutrophilum (strain DSM 2338 / JCM 9278 / NBRC 100436 / V24Sta) (Thermoproteus neutrophilus).